The following is a 220-amino-acid chain: Ribosomal RNA small subunit methyltransferase G 1 (220 aa).

S-adenosyl-L-methionine-binding residues include G79, F84, and R150.

Belongs to the methyltransferase superfamily. RNA methyltransferase RsmG family.

It is found in the cytoplasm. The enzyme catalyses guanosine(527) in 16S rRNA + S-adenosyl-L-methionine = N(7)-methylguanosine(527) in 16S rRNA + S-adenosyl-L-homocysteine. In terms of biological role, specifically methylates the N7 position of guanine in position 527 of 16S rRNA. The sequence is that of Ribosomal RNA small subunit methyltransferase G 1 from Syntrophobacter fumaroxidans (strain DSM 10017 / MPOB).